The chain runs to 317 residues: ATP synthase gamma chain (317 aa).

The protein belongs to the ATPase gamma chain family. In terms of assembly, F-type ATPases have 2 components, CF(1) - the catalytic core - and CF(0) - the membrane proton channel. CF(1) has five subunits: alpha(3), beta(3), gamma(1), delta(1), epsilon(1). CF(0) has three main subunits: a, b and c.

Its subcellular location is the cellular thylakoid membrane. Produces ATP from ADP in the presence of a proton gradient across the membrane. The gamma chain is believed to be important in regulating ATPase activity and the flow of protons through the CF(0) complex. The chain is ATP synthase gamma chain from Synechococcus sp. (strain CC9311).